The primary structure comprises 306 residues: OVARIAN TUMOR DOMAIN-containing deubiquitinating enzyme 1 (306 aa).

One can recognise an OTU domain in the interval Ile-81 to Lys-295. Asp-89 is a catalytic residue. The active-site Nucleophile is the Cys-92. Active-site residues include His-259 and His-288.

Belongs to the peptidase C65 family.

It carries out the reaction Thiol-dependent hydrolysis of ester, thioester, amide, peptide and isopeptide bonds formed by the C-terminal Gly of ubiquitin (a 76-residue protein attached to proteins as an intracellular targeting signal).. With respect to regulation, cleavage activities for 'Lys-48'- and 'Lys-63'-linked ubiquitin (UB) tetramers is inhibited by UB aldehyde and N-ethylmaleimide but not by the metalloprotease inhibitors 1,10-phenanthroline and EDTA, and the serine protease inhibitor phenylmethylsulfonyl fluoride. Functionally, hydrolase that can remove conjugated ubiquitin from proteins in vitro and may therefore play an important regulatory role at the level of protein turnover by preventing degradation. Cysteine protease with a preference for Met-1 and 'Lys-48' over 'Lys-63'-linked ubiquitin (UB) tetramers (e.g. Ub2, Ub3 and Ub4) as substrates. The sequence is that of OVARIAN TUMOR DOMAIN-containing deubiquitinating enzyme 1 from Arabidopsis thaliana (Mouse-ear cress).